An 854-amino-acid polypeptide reads, in one-letter code: ATP-dependent zinc metalloprotease FtsH (854 aa).

Residues 1–5 (MNRKT) are Cytoplasmic-facing. Residues 6 to 26 (VFRNVLLVAVVLLVIYAFSYF) traverse the membrane as a helical segment. Residues 27–112 (SNDTRDFKTV…FNTTVTQESW (86 aa)) lie on the Extracellular side of the membrane. The helical transmembrane segment at 113–133 (LTSILLFVLPMIILFGIFFFV) threads the bilayer. Over 134 to 854 (MNRMQGGGGR…ARWDGPDGSR (721 aa)) the chain is Cytoplasmic. 207–214 (GPPGTGKT) contacts ATP. H429 is a binding site for Zn(2+). The active site involves E430. The Zn(2+) site is built by H433 and D505. A disordered region spans residues 658 to 854 (AGAPNSGVPN…ARWDGPDGSR (197 aa)). 2 stretches are compositionally biased toward low complexity: residues 661–692 (PNSGVPNGGVPNNGGLPNNGNQGPSNGYAQPS) and 698–719 (APQQTPQPGTPDYGAPAGWSAP). Over residues 720–730 (GWPPRENPSPT) the composition is skewed to pro residues. Residues 749–778 (NQSQGQYGQPQHGQPQPDQGQYGQPHPGQQ) are compositionally biased toward low complexity. Residues 812–822 (GNPSGENQWQS) show a composition bias toward polar residues. Over residues 825–834 (PEQPQTPPPH) the composition is skewed to pro residues.

In the central section; belongs to the AAA ATPase family. The protein in the C-terminal section; belongs to the peptidase M41 family. As to quaternary structure, homohexamer. Zn(2+) serves as cofactor.

The protein localises to the cell membrane. In terms of biological role, acts as a processive, ATP-dependent zinc metallopeptidase for both cytoplasmic and membrane proteins. Plays a role in the quality control of integral membrane proteins. This Rhodococcus erythropolis (strain PR4 / NBRC 100887) protein is ATP-dependent zinc metalloprotease FtsH.